Here is a 64-residue protein sequence, read N- to C-terminus: Large ribosomal subunit protein bL33 (64 aa).

Belongs to the bacterial ribosomal protein bL33 family.

This Crocosphaera subtropica (strain ATCC 51142 / BH68) (Cyanothece sp. (strain ATCC 51142)) protein is Large ribosomal subunit protein bL33.